We begin with the raw amino-acid sequence, 386 residues long: ATP phosphoribosyltransferase regulatory subunit (386 aa).

It belongs to the class-II aminoacyl-tRNA synthetase family. HisZ subfamily. As to quaternary structure, heteromultimer composed of HisG and HisZ subunits.

Its subcellular location is the cytoplasm. It functions in the pathway amino-acid biosynthesis; L-histidine biosynthesis; L-histidine from 5-phospho-alpha-D-ribose 1-diphosphate: step 1/9. Required for the first step of histidine biosynthesis. May allow the feedback regulation of ATP phosphoribosyltransferase activity by histidine. This chain is ATP phosphoribosyltransferase regulatory subunit, found in Rhodospirillum centenum (strain ATCC 51521 / SW).